The chain runs to 277 residues: Phosphatidylglycerol--prolipoprotein diacylglyceryl transferase (277 aa).

4 consecutive transmembrane segments (helical) span residues 22 to 42, 51 to 71, 89 to 109, and 116 to 136; these read WYGV…LSEA, IIVD…RIYY, IWHG…TAII, and ISFW…QAIG. R137 is a binding site for a 1,2-diacyl-sn-glycero-3-phospho-(1'-sn-glycerol). 3 consecutive transmembrane segments (helical) span residues 177-197, 205-225, and 235-255; these read QPTF…LLII, GELF…IEGM, and FRVS…LIIY.

It belongs to the Lgt family.

It is found in the cell membrane. It carries out the reaction L-cysteinyl-[prolipoprotein] + a 1,2-diacyl-sn-glycero-3-phospho-(1'-sn-glycerol) = an S-1,2-diacyl-sn-glyceryl-L-cysteinyl-[prolipoprotein] + sn-glycerol 1-phosphate + H(+). It participates in protein modification; lipoprotein biosynthesis (diacylglyceryl transfer). Its function is as follows. Catalyzes the transfer of the diacylglyceryl group from phosphatidylglycerol to the sulfhydryl group of the N-terminal cysteine of a prolipoprotein, the first step in the formation of mature lipoproteins. The chain is Phosphatidylglycerol--prolipoprotein diacylglyceryl transferase from Listeria welshimeri serovar 6b (strain ATCC 35897 / DSM 20650 / CCUG 15529 / CIP 8149 / NCTC 11857 / SLCC 5334 / V8).